A 296-amino-acid chain; its full sequence is Formamidopyrimidine-DNA glycosylase (296 aa).

P2 serves as the catalytic Schiff-base intermediate with DNA. Residue E3 is the Proton donor of the active site. The Proton donor; for beta-elimination activity role is filled by K61. Positions 104, 128, and 174 each coordinate DNA. Residues 260–294 (HAYGQQGQACDRCGSNIIREKFANRSSHFCPRCQL) form an FPG-type zinc finger. R284 (proton donor; for delta-elimination activity) is an active-site residue.

The protein belongs to the FPG family. As to quaternary structure, monomer. The cofactor is Zn(2+).

It catalyses the reaction Hydrolysis of DNA containing ring-opened 7-methylguanine residues, releasing 2,6-diamino-4-hydroxy-5-(N-methyl)formamidopyrimidine.. It carries out the reaction 2'-deoxyribonucleotide-(2'-deoxyribose 5'-phosphate)-2'-deoxyribonucleotide-DNA = a 3'-end 2'-deoxyribonucleotide-(2,3-dehydro-2,3-deoxyribose 5'-phosphate)-DNA + a 5'-end 5'-phospho-2'-deoxyribonucleoside-DNA + H(+). Its function is as follows. Involved in base excision repair of DNA damaged by oxidation or by mutagenic agents. Acts as a DNA glycosylase that recognizes and removes damaged bases. Has a preference for oxidized purines, such as 7,8-dihydro-8-oxoguanine (8-oxoG). Has AP (apurinic/apyrimidinic) lyase activity and introduces nicks in the DNA strand. Cleaves the DNA backbone by beta-delta elimination to generate a single-strand break at the site of the removed base with both 3'- and 5'-phosphates. The chain is Formamidopyrimidine-DNA glycosylase from Corynebacterium diphtheriae (strain ATCC 700971 / NCTC 13129 / Biotype gravis).